The following is a 611-amino-acid chain: Adenosylhomocysteinase 3 (611 aa).

3 stretches are compositionally biased toward low complexity: residues 1-14, 40-57, and 68-78; these read MSVQ…AAKV, AMAP…APAA, and GPAAALSPAAG. The disordered stretch occupies residues 1–184; the sequence is MSVQVVSAAA…KQQKNSKGNS (184 aa). S2 is modified (N-acetylserine). The LISN domain, inhibits interaction with ITPR1 stretch occupies residues 2 to 109; it reads SVQVVSAAAA…DGGEALVSPD (108 aa). S107 carries the phosphoserine modification. The segment covering 135 to 144 has biased composition (basic residues); sequence RPTKIGRRSL. The segment covering 145 to 164 has biased composition (low complexity); sequence SRSISQSSTDSYSSAASYTD. Phosphoserine occurs at positions 149, 152, 155, and 158. Positions 236, 310, and 335 each coordinate substrate. 336 to 338 is an NAD(+) binding site; sequence SVT. Substrate is bound by residues K365 and D369. NAD(+)-binding positions include N370, 401–406, E422, N457, 478–479, and N525; these read GEVGKG and MG.

It belongs to the adenosylhomocysteinase family. In terms of assembly, homotetramer. Forms heteromultimers with AHCYL1 (via the C-terminal region). Interacts with ITPR1; with lower affinity than AHCYL1 and maybe via ITPR1. Interacts with SLC4A4. Interacts with ZCCHC4. The cofactor is NAD(+). Post-translationally, phosphorylated during neuronal differentiation at the LISN domain. As to expression, expressed in parotid and acinar cells (at protein level).

Its subcellular location is the cytoplasm. It localises to the microsome. It catalyses the reaction S-adenosyl-L-homocysteine + H2O = L-homocysteine + adenosine. Its pathway is amino-acid biosynthesis; L-homocysteine biosynthesis; L-homocysteine from S-adenosyl-L-homocysteine: step 1/1. Functionally, may regulate the electrogenic sodium/bicarbonate cotransporter SLC4A4 activity and Mg(2+)-sensitivity. On the contrary of its homolog AHCYL1, does not regulate ITPR1 sensitivity to inositol 1,4,5-trisphosphate. This chain is Adenosylhomocysteinase 3, found in Bos taurus (Bovine).